Consider the following 192-residue polypeptide: NF-kappa-B inhibitor-interacting Ras-like protein 1 (192 aa).

Residues 1–192 (MGKGCKVVVC…KSKGTPSNDI (192 aa)) form a small GTPase-like region. Residue 11–18 (GMASVGKT) coordinates GTP. The Effector region signature appears at 35–43 (TSDTQEDIY). Residues 61 to 65 (DTRGL) and 120 to 123 (NKCE) contribute to the GTP site. The interval 169-192 (TQPQSKSAFPLPGRKSKGTPSNDI) is disordered.

This sequence belongs to the small GTPase superfamily. Ras family. KappaB-Ras subfamily.

It localises to the cytoplasm. Atypical Ras-like protein that acts as a potent regulator of NF-kappa-B activity by preventing the degradation of NF-kappa-B inhibitor beta (NFKBIB) by most signals, explaining why NFKBIB is more resistant to degradation. This Danio rerio (Zebrafish) protein is NF-kappa-B inhibitor-interacting Ras-like protein 1 (nkiras1).